We begin with the raw amino-acid sequence, 231 residues long: Ribose-5-phosphate isomerase A (231 aa).

Substrate is bound by residues 40–43 (TGST), 93–96 (DGAD), and 106–109 (KGGG). The active-site Proton acceptor is the E115. Position 133 (K133) interacts with substrate.

It belongs to the ribose 5-phosphate isomerase family. Homodimer.

It carries out the reaction aldehydo-D-ribose 5-phosphate = D-ribulose 5-phosphate. It participates in carbohydrate degradation; pentose phosphate pathway; D-ribose 5-phosphate from D-ribulose 5-phosphate (non-oxidative stage): step 1/1. Its function is as follows. Catalyzes the reversible conversion of ribose-5-phosphate to ribulose 5-phosphate. This is Ribose-5-phosphate isomerase A from Escherichia coli O1:K1 / APEC.